The chain runs to 296 residues: Ribosomal RNA small subunit methyltransferase A (296 aa).

Residues N30, L32, G57, E78, D103, and N128 each coordinate S-adenosyl-L-methionine.

The protein belongs to the class I-like SAM-binding methyltransferase superfamily. rRNA adenine N(6)-methyltransferase family. RsmA subfamily.

The protein localises to the cytoplasm. The enzyme catalyses adenosine(1518)/adenosine(1519) in 16S rRNA + 4 S-adenosyl-L-methionine = N(6)-dimethyladenosine(1518)/N(6)-dimethyladenosine(1519) in 16S rRNA + 4 S-adenosyl-L-homocysteine + 4 H(+). Functionally, specifically dimethylates two adjacent adenosines (A1518 and A1519) in the loop of a conserved hairpin near the 3'-end of 16S rRNA in the 30S particle. May play a critical role in biogenesis of 30S subunits. In Staphylococcus epidermidis (strain ATCC 35984 / DSM 28319 / BCRC 17069 / CCUG 31568 / BM 3577 / RP62A), this protein is Ribosomal RNA small subunit methyltransferase A.